The primary structure comprises 959 residues: Probable LRR receptor-like serine/threonine-protein kinase At5g37450 (959 aa).

Residues 1–24 (MKEMMGVVGIILVVSSCCLSLLDA) form the signal peptide. At 25–565 (QEITHPTDVS…SGMSIGVSVG (541 aa)) the chain is on the extracellular side. Residues Asn-62, Asn-88, Asn-102, and Asn-123 are each glycosylated (N-linked (GlcNAc...) asparagine). LRR repeat units follow at residues 79–100 (VKEL…LGLL), 101–124 (SNLT…LGNL), 125–148 (THLI…LGSL), 149–172 (SNLL…LANL), 173–198 (KKLK…TLTN), 200–220 (LHFL…LAQM), 221–244 (PSLR…SYGS), 246–268 (PNLV…LSKS), and 269–292 (LVLY…KFSA). N-linked (GlcNAc...) asparagine glycosylation occurs at Asn-182. Residues Asn-293, Asn-311, Asn-327, Asn-358, Asn-369, and Asn-510 are each glycosylated (N-linked (GlcNAc...) asparagine). 3 LRR repeats span residues 294-314 (ITTI…NFSG), 315-338 (LPRL…IWEN), and 341-366 (LKAE…LLNP). The chain crosses the membrane as a helical span at residues 566–586 (IIIGAIAFFLVLSSLALVFFI). Residues 587 to 959 (KRSKRKRKTR…SGVIPSIAPR (373 aa)) are Cytoplasmic-facing. Residues 631-906 (FSDLSQIGRG…RELENIYGLI (276 aa)) enclose the Protein kinase domain. ATP is bound by residues 637-645 (IGRGGYGKV) and Lys-659. Asp-755 acts as the Proton acceptor in catalysis.

It belongs to the protein kinase superfamily. Ser/Thr protein kinase family.

It localises to the membrane. It carries out the reaction L-seryl-[protein] + ATP = O-phospho-L-seryl-[protein] + ADP + H(+). It catalyses the reaction L-threonyl-[protein] + ATP = O-phospho-L-threonyl-[protein] + ADP + H(+). This is Probable LRR receptor-like serine/threonine-protein kinase At5g37450 from Arabidopsis thaliana (Mouse-ear cress).